The chain runs to 306 residues: Protein YIPF1 (306 aa).

Residues M1–D119 are Cytoplasmic-facing. Residues I30–E63 form a disordered region. Residues E50–E63 show a composition bias toward acidic residues. Residues L120 to L140 form a helical membrane-spanning segment. Residues S141–S162 lie on the Lumenal side of the membrane. The helical transmembrane segment at I163–L183 threads the bilayer. Over L184–E200 the chain is Cytoplasmic. Residues I201–I221 traverse the membrane as a helical segment. Over P222–R227 the chain is Lumenal. A helical membrane pass occupies residues W228–P248. Topologically, residues A249 to R256 are cytoplasmic. Residues V257–L277 form a helical membrane-spanning segment. Residues A278–S306 are Lumenal-facing. N-linked (GlcNAc...) asparagine glycosylation occurs at N297.

This sequence belongs to the YIP1 family. In terms of assembly, interacts with YIPF6; this interaction may stabilize YIPF1. May also form a ternary complex with YIPF2 and YIPF6.

Its subcellular location is the golgi apparatus. It is found in the cis-Golgi network membrane. The protein resides in the trans-Golgi network membrane. It localises to the late endosome membrane. In Mus musculus (Mouse), this protein is Protein YIPF1 (Yipf1).